The sequence spans 192 residues: uncharacterized protein (192 aa).

The Nudix hydrolase domain maps to 29–160 (HRQAAVLIPI…PLDIYRRGDS (132 aa)). A Nudix box motif is present at residues 67–89 (GAVDDTDASVIAAALREAEEEVA). 2 residues coordinate Mg(2+): glutamate 83 and glutamate 87.

It belongs to the Nudix hydrolase family. PCD1 subfamily. Mn(2+) serves as cofactor. Mg(2+) is required as a cofactor.

Probably mediates the hydrolysis of some nucleoside diphosphate derivatives. This is an uncharacterized protein from Shigella flexneri.